Here is a 660-residue protein sequence, read N- to C-terminus: DNA mismatch repair protein MutL (660 aa).

The protein belongs to the DNA mismatch repair MutL/HexB family.

In terms of biological role, this protein is involved in the repair of mismatches in DNA. It is required for dam-dependent methyl-directed DNA mismatch repair. May act as a 'molecular matchmaker', a protein that promotes the formation of a stable complex between two or more DNA-binding proteins in an ATP-dependent manner without itself being part of a final effector complex. The protein is DNA mismatch repair protein MutL of Streptococcus equi subsp. zooepidemicus (strain H70).